The sequence spans 151 residues: Arginine repressor (151 aa).

This sequence belongs to the ArgR family.

Its subcellular location is the cytoplasm. It participates in amino-acid biosynthesis; L-arginine biosynthesis [regulation]. Functionally, regulates arginine biosynthesis genes. The protein is Arginine repressor of Enterococcus faecalis (strain ATCC 700802 / V583).